The primary structure comprises 448 residues: Signal recognition particle 54 kDa protein (448 aa).

Residues 107–114 (GIQGSGKT), 189–193 (DSAGR), and 247–250 (TKLD) each bind GTP.

Belongs to the GTP-binding SRP family. SRP54 subfamily. In terms of assembly, part of the signal recognition particle protein translocation system, which is composed of SRP and FtsY. Archaeal SRP consists of a 7S RNA molecule of 300 nucleotides and two protein subunits: SRP54 and SRP19.

The protein localises to the cytoplasm. It carries out the reaction GTP + H2O = GDP + phosphate + H(+). Its function is as follows. Involved in targeting and insertion of nascent membrane proteins into the cytoplasmic membrane. Binds to the hydrophobic signal sequence of the ribosome-nascent chain (RNC) as it emerges from the ribosomes. The SRP-RNC complex is then targeted to the cytoplasmic membrane where it interacts with the SRP receptor FtsY. The chain is Signal recognition particle 54 kDa protein from Thermococcus kodakarensis (strain ATCC BAA-918 / JCM 12380 / KOD1) (Pyrococcus kodakaraensis (strain KOD1)).